The following is a 74-amino-acid chain: ATP synthase subunit c (74 aa).

The next 2 helical transmembrane spans lie at 8–28 (FIGI…VSNI) and 52–72 (IGAG…MLLI).

This sequence belongs to the ATPase C chain family. In terms of assembly, F-type ATPases have 2 components, F(1) - the catalytic core - and F(0) - the membrane proton channel. F(1) has five subunits: alpha(3), beta(3), gamma(1), delta(1), epsilon(1). F(0) has three main subunits: a(1), b(2) and c(10-14). The alpha and beta chains form an alternating ring which encloses part of the gamma chain. F(1) is attached to F(0) by a central stalk formed by the gamma and epsilon chains, while a peripheral stalk is formed by the delta and b chains.

It is found in the cell inner membrane. F(1)F(0) ATP synthase produces ATP from ADP in the presence of a proton or sodium gradient. F-type ATPases consist of two structural domains, F(1) containing the extramembraneous catalytic core and F(0) containing the membrane proton channel, linked together by a central stalk and a peripheral stalk. During catalysis, ATP synthesis in the catalytic domain of F(1) is coupled via a rotary mechanism of the central stalk subunits to proton translocation. In terms of biological role, key component of the F(0) channel; it plays a direct role in translocation across the membrane. A homomeric c-ring of between 10-14 subunits forms the central stalk rotor element with the F(1) delta and epsilon subunits. The sequence is that of ATP synthase subunit c from Rickettsia felis (strain ATCC VR-1525 / URRWXCal2) (Rickettsia azadi).